The chain runs to 755 residues: Protein phosphatase 1E (755 aa).

Residues 21-131 are disordered; it reads EFRGPCGGGE…PPLPPLPRPL (111 aa). 7 tandem repeats follow at residues 31–32, 33–34, 35–36, 37–38, 39–40, 41–42, and 43–44. The 11 X 2 AA tandem repeats of P-E stretch occupies residues 31-52; it reads PEPEPEPEPEPEPESEPEPEPE. 2 stretches are compositionally biased toward acidic residues: residues 31–68 and 77–101; these read PEPEPEPEPEPEPESEPEPEPELVEAEAAEASVEEPGE and EEGDQEQDPEPEEEAAVEGEEEEEG. One copy of the 8; approximate repeat lies at 45-46; sequence SE. 3 consecutive repeat copies span residues 47–48, 49–50, and 51–52. Positions 102-113 are enriched in low complexity; that stretch reads AATAAAAPGHSA. Pro residues predominate over residues 114–129; it reads VPPPPPQLPPLPPLPR. The region spanning 231-488 is the PPM-type phosphatase domain; the sequence is ETSIHAIKNM…DNITVIVVFL (258 aa). Mn(2+)-binding residues include aspartate 273, glycine 274, aspartate 435, and aspartate 479. A disordered region spans residues 498–537; that stretch reads SEESDWTENSFQGGQEDGGDDKENHGECKRPWPQHQCSAP. Residues 518-527 show a composition bias toward basic and acidic residues; that stretch reads DKENHGECKR. Residues serine 535 and serine 548 each carry the phosphoserine modification.

This sequence belongs to the PP2C family. As to quaternary structure, heterotrimer. Interacts with PAX1 and ARHGEF6 (or ARHGEF7). Mg(2+) is required as a cofactor. It depends on Mn(2+) as a cofactor.

It is found in the nucleus. It localises to the cytoplasm. The enzyme catalyses O-phospho-L-seryl-[protein] + H2O = L-seryl-[protein] + phosphate. It carries out the reaction O-phospho-L-threonyl-[protein] + H2O = L-threonyl-[protein] + phosphate. Protein phosphatase that inactivates multifunctional CaM kinases such as CAMK4 and CAMK2. Dephosphorylates and inactivates PAK. May play a role in the inhibition of actin fiber stress breakdown and in morphological changes driven by TNK2/CDC42. Dephosphorylates PRKAA2. This Homo sapiens (Human) protein is Protein phosphatase 1E (PPM1E).